Consider the following 349-residue polypeptide: Macrophage-capping protein (349 aa).

M1 carries the post-translational modification N-acetylmethionine. Gelsolin-like repeat units follow at residues 28–107, 147–222, and 264–342; these read KLKP…DLFM, KNIR…AEMI, and LTKV…PIFK. The Nuclear localization signal motif lies at 138 to 147; it reads RKLYQVKGKK. Position 338 is a phosphoserine (S338).

The protein belongs to the villin/gelsolin family. As to quaternary structure, interacts with NUP62. Interacts with NUTF2 and RAN; involved in CAPG nuclear import. Phosphorylated.

It localises to the nucleus. The protein resides in the cytoplasm. The protein localises to the melanosome. Its subcellular location is the cell projection. It is found in the lamellipodium. It localises to the ruffle. Its function is as follows. Calcium-sensitive protein which reversibly blocks the barbed ends of actin filaments but does not sever preformed actin filaments. May play an important role in macrophage function. May play a role in regulating cytoplasmic and/or nuclear structures through potential interactions with actin. May bind DNA. Uncapping occurs either when Ca(2+) falls or when the concentration of polyphosphoinositide rises, both at low and high Ca(2+). This is Macrophage-capping protein (Capg) from Rattus norvegicus (Rat).